Here is a 504-residue protein sequence, read N- to C-terminus: Catalase (504 aa).

Residues 1-25 (MSKQDGKLTGLFGAPVSDRENSMTA) form a disordered region. Residues His56 and Asn129 contribute to the active site. Tyr339 is a heme binding site.

This sequence belongs to the catalase family. Homodimer. The cofactor is heme.

The catalysed reaction is 2 H2O2 = O2 + 2 H2O. Decomposes hydrogen peroxide into water and oxygen; serves to protect cells from the toxic effects of hydrogen peroxide. The polypeptide is Catalase (katA) (Staphylococcus epidermidis (strain ATCC 35984 / DSM 28319 / BCRC 17069 / CCUG 31568 / BM 3577 / RP62A)).